The chain runs to 405 residues: S-adenosylmethionine synthase (405 aa).

139-144 contributes to the ATP binding site; that stretch reads GKGSAD.

This sequence belongs to the AdoMet synthase 2 family. Requires Mg(2+) as cofactor.

It catalyses the reaction L-methionine + ATP + H2O = S-adenosyl-L-methionine + phosphate + diphosphate. The protein operates within amino-acid biosynthesis; S-adenosyl-L-methionine biosynthesis; S-adenosyl-L-methionine from L-methionine: step 1/1. Its function is as follows. Catalyzes the formation of S-adenosylmethionine from methionine and ATP. The polypeptide is S-adenosylmethionine synthase (Sulfurisphaera tokodaii (strain DSM 16993 / JCM 10545 / NBRC 100140 / 7) (Sulfolobus tokodaii)).